The following is a 426-amino-acid chain: Glutamyl-tRNA reductase (426 aa).

Substrate is bound by residues 52–55 (TCNR), Ser-110, 115–117 (EYE), and Gln-121. Residue Cys-53 is the Nucleophile of the active site. Position 190 to 195 (190 to 195 (GAGEMA)) interacts with NADP(+).

This sequence belongs to the glutamyl-tRNA reductase family. As to quaternary structure, homodimer.

The enzyme catalyses (S)-4-amino-5-oxopentanoate + tRNA(Glu) + NADP(+) = L-glutamyl-tRNA(Glu) + NADPH + H(+). It participates in porphyrin-containing compound metabolism; protoporphyrin-IX biosynthesis; 5-aminolevulinate from L-glutamyl-tRNA(Glu): step 1/2. Catalyzes the NADPH-dependent reduction of glutamyl-tRNA(Glu) to glutamate 1-semialdehyde (GSA). The sequence is that of Glutamyl-tRNA reductase from Saccharolobus solfataricus (strain ATCC 35092 / DSM 1617 / JCM 11322 / P2) (Sulfolobus solfataricus).